The sequence spans 281 residues: Small ribosomal subunit protein uS2 (281 aa).

Residues 225-281 (LMERKAEKPEEEETEEAAPRRERRARSGARRSRQNENEATAEAATEVAEAPEAEEAE) are disordered. Over residues 245–256 (RERRARSGARRS) the composition is skewed to basic residues. Over residues 262 to 272 (EATAEAATEVA) the composition is skewed to low complexity.

It belongs to the universal ribosomal protein uS2 family.

The sequence is that of Small ribosomal subunit protein uS2 from Porphyromonas gingivalis (strain ATCC 33277 / DSM 20709 / CIP 103683 / JCM 12257 / NCTC 11834 / 2561).